A 547-amino-acid chain; its full sequence is Collagen EMF1-alpha (547 aa).

Disordered regions lie at residues 1–99 (GVPG…APGV) and 116–311 (GPDG…GGGI). The tract at residues 1 to 280 (GVPGPNGDVG…QGPRGGQGPK (280 aa)) is triple-helical region. Composition is skewed to low complexity over residues 27–69 (QGPD…IRGQ) and 160–175 (QGSK…VGPQ). An Allysine modification is found at Lys187. Residues 219-228 (VKGEKGEVGD) are compositionally biased toward basic and acidic residues. Positions 246 to 271 (DAGPAGPIGDAGIQGPPGQDGPTGAQ) are enriched in low complexity. Gly residues predominate over residues 272 to 281 (GPRGGQGPKG). Residues 308–336 (GGGIILVPVNDQNPTRSPVSGSVFYRGQA) form a telopeptide region. A propeptide spans 337–547 (EETDVNLGSV…GFEMGPACFY (211 aa)) (C-terminal propeptide). The region spanning 343–547 (LGSVADVIEL…GFEMGPACFY (205 aa)) is the Fibrillar collagen NC1 domain. 2 N-linked (GlcNAc...) asparagine glycosylation sites follow: Asn381 and Asn406.

Belongs to the fibrillar collagen family.

The protein resides in the secreted. It is found in the extracellular space. It localises to the extracellular matrix. The chain is Collagen EMF1-alpha (COLF1) from Ephydatia muelleri (Mueller's freshwater sponge).